Here is a 404-residue protein sequence, read N- to C-terminus: Argininosuccinate synthase (404 aa).

Residue 9-17 (AYSGGLDTS) participates in ATP binding. Residue Tyr86 coordinates L-citrulline. Gly116 is an ATP binding site. 3 residues coordinate L-aspartate: Thr118, Asn122, and Asp123. Asn122 lines the L-citrulline pocket. The L-citrulline site is built by Arg126, Ser174, Ser183, Glu259, and Tyr271.

This sequence belongs to the argininosuccinate synthase family. Type 1 subfamily. Homotetramer.

It is found in the cytoplasm. The enzyme catalyses L-citrulline + L-aspartate + ATP = 2-(N(omega)-L-arginino)succinate + AMP + diphosphate + H(+). It participates in amino-acid biosynthesis; L-arginine biosynthesis; L-arginine from L-ornithine and carbamoyl phosphate: step 2/3. This chain is Argininosuccinate synthase, found in Listeria monocytogenes serotype 4b (strain CLIP80459).